The primary structure comprises 85 residues: Small ribosomal subunit protein uS12m (85 aa).

The protein belongs to the universal ribosomal protein uS12 family.

The protein resides in the mitochondrion matrix. It localises to the kinetoplast. Its function is as follows. Protein S12 is involved in the translation initiation step. This chain is Small ribosomal subunit protein uS12m (RPS12), found in Leishmania tarentolae (Sauroleishmania tarentolae).